Reading from the N-terminus, the 123-residue chain is uncharacterized protein (123 aa).

The tract at residues 17-74 is disordered; sequence FQKKKKTGSQTRRTLKPQPQQLQQNLPKGHETTGHTYERVLQQQGSQERSPGLMSEDS. Phosphothreonine is present on threonine 30. A compositionally biased stretch (low complexity) spans 32–43; that stretch reads KPQPQQLQQNLP. A compositionally biased stretch (basic and acidic residues) spans 44 to 54; it reads KGHETTGHTYE. Serine 62 is modified (phosphoserine).

This is an uncharacterized protein from Homo sapiens (Human).